Here is a 140-residue protein sequence, read N- to C-terminus: ATP synthase epsilon chain (140 aa).

This sequence belongs to the ATPase epsilon chain family. In terms of assembly, F-type ATPases have 2 components, CF(1) - the catalytic core - and CF(0) - the membrane proton channel. CF(1) has five subunits: alpha(3), beta(3), gamma(1), delta(1), epsilon(1). CF(0) has three main subunits: a, b and c.

The protein localises to the cell inner membrane. Functionally, produces ATP from ADP in the presence of a proton gradient across the membrane. The sequence is that of ATP synthase epsilon chain from Colwellia maris.